Here is a 561-residue protein sequence, read N- to C-terminus: Transmembrane protein 209 (561 aa).

2 positions are modified to phosphoserine: S9 and S11. Residues 28 to 48 (VVLAWGLLNVSMAGMIYTEMT) traverse the membrane as a helical segment. N57 carries an N-linked (GlcNAc...) asparagine glycan. The helical transmembrane segment at 60 to 80 (YWPLWYIELALASLFSLNALF) threads the bilayer. Position 98 is a phosphoserine (S98). Disordered stretches follow at residues 120 to 156 (LAAT…KFAT) and 196 to 233 (SLSP…TDKE). Over residues 138–152 (SVLSYSPSRSPSTSP) the composition is skewed to low complexity. Residues S201 and S248 each carry the phosphoserine modification. The tract at residues 250 to 270 (EEKQHRVKLGSPDSTSPSTSP) is disordered. Over residues 260-270 (SPDSTSPSTSP) the composition is skewed to low complexity. The N-linked (GlcNAc...) asparagine glycan is linked to N274. S278 is subject to Phosphoserine.

Interacts with NUP205.

Its subcellular location is the membrane. It localises to the nucleus envelope. The protein resides in the golgi apparatus. It is found in the cytoplasm. Nuclear envelope protein which in association with NUP205, may be involved in nuclear transport of various nuclear proteins in addition to MYC. This chain is Transmembrane protein 209 (Tmem209), found in Rattus norvegicus (Rat).